Reading from the N-terminus, the 790-residue chain is Tumor necrosis factor alpha-induced protein 3 (790 aa).

Alanine 2 carries the post-translational modification N-acetylalanine. The interval 58–300 (PQFREIIHKA…LTDPENEMKE (243 aa)) is TRAF-binding. The OTU domain occupies 92–263 (LVALKTNGDG…SHHFVPLVTL (172 aa)). Aspartate 100 is an active-site residue. Cysteine 103 acts as the Nucleophile in catalysis. 3 interaction with ubiquitin regions span residues 157 to 159 (LCY), 190 to 192 (SLE), and 224 to 227 (FAPL). Residue histidine 256 is the Proton acceptor of the active site. The span at 357–368 (QENSEQGRREGH) shows a compositional bias: basic and acidic residues. Positions 357–377 (QENSEQGRREGHAQNPMEPSV) are disordered. The segment at 369 to 775 (AQNPMEPSVP…ACDHFGNAKC (407 aa)) is interaction with TNIP1. An A20-type 1 zinc finger spans residues 381 to 416 (SLMDVKCETPNCPFFMSVNTQPLCHECSERRQKNQN). The segment at 386–453 (KCETPNCPFF…EPLAWNPEES (68 aa)) is interaction with RIPK1. Residues cysteine 387, cysteine 392, cysteine 404, and cysteine 407 each contribute to the Zn(2+) site. Disordered stretches follow at residues 415 to 434 (QNKL…PGMA) and 447 to 468 (AWNP…PSPF). Residue serine 459 is modified to Phosphoserine. A20-type zinc fingers lie at residues 472 to 507 (ETTA…LHAS) and 515 to 548 (HLDP…AEAS). Residues cysteine 478, cysteine 483, cysteine 495, cysteine 498, cysteine 521, cysteine 524, cysteine 536, and cysteine 539 each contribute to the Zn(2+) site. Positions 550–583 (SLSTSLPPSCHQRSKSDPSRLVRSPSPHSCHRAG) are disordered. Phosphoserine is present on serine 575. The segment at 601–636 (RTGTSKCRKAGCVYFGTPENKGFCTLCFIEYRENKH) adopts an A20-type 4 zinc-finger fold. Residues 605 to 655 (SKCRKAGCVYFGTPENKGFCTLCFIEYRENKHFAAASGKVSPTASRFQNTI) are required for proteasomal degradation of UBE2N and UBE2D3, TRAF6 deubiquitination, and TAX1BP1 interaction with UBE2N. A sufficient for inhibitory activity of TNF-induced NF-kappa-B activity region spans residues 606-790 (KCRKAGCVYF…ECFQFKQMYG (185 aa)). Positions 607, 612, 624, and 627 each coordinate Zn(2+). Serine 645 bears the Phosphoserine mark. The segment at 651–686 (FQNTIPCLGRECGTLGSTMFEGYCQKCFIEAQNQRF) adopts an A20-type 5 zinc-finger fold. Cysteine 657, cysteine 662, cysteine 674, and cysteine 677 together coordinate Zn(2+). The segment covering 689-705 (AKRTEEQLRSSQRRDVP) has biased composition (basic and acidic residues). The tract at residues 689 to 712 (AKRTEEQLRSSQRRDVPRTTQSTS) is disordered. A required for lysosomal localization and for TRAF2 lysosomal degradation region spans residues 697–790 (RSSQRRDVPR…ECFQFKQMYG (94 aa)). 2 consecutive A20-type zinc fingers follow at residues 710–745 (STSR…RMGP) and 756–790 (DPPK…QMYG). Cysteine 716, cysteine 721, cysteine 733, cysteine 736, cysteine 762, cysteine 767, cysteine 779, and cysteine 782 together coordinate Zn(2+).

This sequence belongs to the peptidase C64 family. Homodimer. Interacts with TNIP1, TAX1BP1 and TRAF2. Interacts with RNF11, ITCH and TAX1BP1 only after TNF stimulation; these interaction are transient and they are lost after 1 hour of stimulation with TNF. Interacts with YWHAZ and YWHAH. Interacts with IKBKG; the interaction is induced by TNF stimulation and by polyubiquitin. Interacts with RIPK1. Interacts with UBE2N; the interaction requires TAX1BP1. Interacts with TRAF6; the interaction is inhibited by HTLV-1 protein Tax. In terms of processing, proteolytically cleaved by MALT1 upon TCR stimulation; disrupts NF-kappa-B inhibitory function and results in increased IL-2 production. It is proposed that only a fraction of TNFAIP3 colocalized with TCR and CBM complex is cleaved, leaving the main TNFAIP3 pool intact.

The protein resides in the cytoplasm. It is found in the nucleus. The protein localises to the lysosome. It catalyses the reaction Thiol-dependent hydrolysis of ester, thioester, amide, peptide and isopeptide bonds formed by the C-terminal Gly of ubiquitin (a 76-residue protein attached to proteins as an intracellular targeting signal).. In terms of biological role, ubiquitin-editing enzyme that contains both ubiquitin ligase and deubiquitinase activities. Involved in immune and inflammatory responses signaled by cytokines, such as TNF-alpha and IL-1 beta, or pathogens via Toll-like receptors (TLRs) through terminating NF-kappa-B activity. Essential component of a ubiquitin-editing protein complex, comprising also RNF11, ITCH and TAX1BP1, that ensures the transient nature of inflammatory signaling pathways. In cooperation with TAX1BP1 promotes disassembly of E2-E3 ubiquitin protein ligase complexes in IL-1R and TNFR-1 pathways; affected are at least E3 ligases TRAF6, TRAF2 and BIRC2, and E2 ubiquitin-conjugating enzymes UBE2N and UBE2D3. In cooperation with TAX1BP1 promotes ubiquitination of UBE2N and proteasomal degradation of UBE2N and UBE2D3. Upon TNF stimulation, deubiquitinates 'Lys-63'-polyubiquitin chains on RIPK1 and catalyzes the formation of 'Lys-48'-polyubiquitin chains. This leads to RIPK1 proteasomal degradation and consequently termination of the TNF- or LPS-mediated activation of NF-kappa-B. Deubiquitinates TRAF6 probably acting on 'Lys-63'-linked polyubiquitin. Upon T-cell receptor (TCR)-mediated T-cell activation, deubiquitinates 'Lys-63'-polyubiquitin chains on MALT1 thereby mediating disassociation of the CBM (CARD11:BCL10:MALT1) and IKK complexes and preventing sustained IKK activation. Deubiquitinates NEMO/IKBKG; the function is facilitated by TNIP1 and leads to inhibition of NF-kappa-B activation. Upon stimulation by bacterial peptidoglycans, probably deubiquitinates RIPK2. Can also inhibit I-kappa-B-kinase (IKK) through a non-catalytic mechanism which involves polyubiquitin; polyubiquitin promotes association with IKBKG and prevents IKK MAP3K7-mediated phosphorylation. Targets TRAF2 for lysosomal degradation. In vitro able to deubiquitinate 'Lys-11'-, 'Lys-48'- and 'Lys-63' polyubiquitin chains. Inhibitor of programmed cell death. Has a role in the function of the lymphoid system. Required for LPS-induced production of pro-inflammatory cytokines and IFN beta in LPS-tolerized macrophages. In Homo sapiens (Human), this protein is Tumor necrosis factor alpha-induced protein 3 (TNFAIP3).